The chain runs to 471 residues: O-acetyltransferase astG (471 aa).

Belongs to the fumigaclavine B O-acetyltransferase family. As to quaternary structure, monomer.

The catalysed reaction is dideacetyl astellolide A + acetyl-CoA = 14-deacetyl astellolide A + CoA. The enzyme catalyses dideacetyl astellolide B + acetyl-CoA = 14-deacetyl astellolide B + CoA. The protein operates within secondary metabolite biosynthesis; terpenoid biosynthesis. In terms of biological role, O-acetyltransferase; part of the gene cluster that mediates the biosynthesis of astellolides, drimane-type sesquiterpene esters that show antimicrobial, anti-inflammatory, and anti-tumor activities. The first step in astellolide biosynthesis is performed by the sesquiterpene cyclase astC that catalyzes the formation of drimanyl pyrophosphate from farnesyl pyrophosphate. Drimanyl pyrophosphate is then dephosphorylated by the sesquiterpene phosphatase astI to produce drimanyl monophosphate which is further dephosphorylated to drim-8-ene-11-ol by atsK. Drim-8-ene-11-ol is converted to confertifolin, probably by the cytochrome P450 monooxygenase astD and/or the dehydrogenase astE. The cytochrome P450 monooxygenases astB, astF and astJ then hydroxylate confertifolin at C6, C14, or C15 to form trihydroxy confertifolin. The nonribosomal peptide synthetase astA catalyzes ester bond formation between trihydroxy contifolin and benzoic acid (BA) or 4-hydroxy benzoic acid (4HBA), leading to the formation of dideacetyl astellolides A and B, respectively. Finally, the O-acetyltransferase astG converts dideacetyl astellolides A and B into deacetyl astellolides A and B. The sequence is that of O-acetyltransferase astG from Aspergillus oryzae (strain ATCC 42149 / RIB 40) (Yellow koji mold).